Reading from the N-terminus, the 223-residue chain is ATP synthase subunit a 2 (223 aa).

Helical transmembrane passes span 17–37 (VAITRPVVTTWVIMAALALVC), 77–97 (FLPLLGTLIIFLVVANLSGVL), 106–126 (KIETPAALALIVFFSVHYFGV), 173–193 (FIIGLVVALAGLFVPIPLMAL), and 195–215 (ILVGLVQAYIFTVLATVFIGA).

Belongs to the ATPase A chain family. F-type ATPases have 2 components, CF(1) - the catalytic core - and CF(0) - the membrane proton channel. CF(1) has five subunits: alpha(3), beta(3), gamma(1), delta(1), epsilon(1). CF(0) has four main subunits: a, b, b' and c.

It localises to the cell inner membrane. In terms of biological role, key component of the proton channel; it plays a direct role in the translocation of protons across the membrane. The polypeptide is ATP synthase subunit a 2 (Bradyrhizobium sp. (strain BTAi1 / ATCC BAA-1182)).